A 926-amino-acid polypeptide reads, in one-letter code: G-protein coupled receptor family C group 6 member A (926 aa).

The N-terminal stretch at 1 to 18 (MAFLIILITCFVIILATS) is a signal peptide. Over 19 to 594 (QPCQTPDDFV…EYLNWNDSLA (576 aa)) the chain is Extracellular. N-linked (GlcNAc...) asparagine glycans are attached at residues N121, N259, N332, N378, N452, N555, N567, and N590. The chain crosses the membrane as a helical span at residues 595 to 615 (ILLLILSLLGIIFVLVVGIIF). At 616-631 (TRNLNTPVVKSSGGLR) the chain is on the cytoplasmic side. A helical membrane pass occupies residues 632–652 (VCYVILLCHFLNFASTSFFIG). At 653–669 (EPQDFTCKTRQTMFGVS) the chain is on the extracellular side. The chain crosses the membrane as a helical span at residues 670 to 690 (FTLCISCILTKSLKILLAFSF). Topologically, residues 691-704 (DPKLQKFLKCLYRP) are cytoplasmic. A helical transmembrane segment spans residues 705–725 (ILIIFTCTGIQVVICTLWLIF). The Extracellular segment spans residues 726–748 (AAPTVEVNVSLPRVIILECEEGS). N733 carries N-linked (GlcNAc...) asparagine glycosylation. A helical transmembrane segment spans residues 749 to 769 (ILAFGTMLGYIAILAFICFIF). Residues 770–782 (AFKGKYENYNEAK) lie on the Cytoplasmic side of the membrane. Residues 783 to 803 (FITFGMLIYFIAWITFIPIYA) form a helical membrane-spanning segment. The Extracellular portion of the chain corresponds to 804–810 (TTFGKYV). The helical transmembrane segment at 811–831 (PAVEIIVILISNYGILYCTFI) threads the bilayer. The Cytoplasmic segment spans residues 832–926 (PKCYVIICKQ…TLPRKRMSSI (95 aa)).

It belongs to the G-protein coupled receptor 3 family. In terms of assembly, homodimer; disulfide-linked. In terms of tissue distribution, isoform 1 is expressed at high level in brain, skeletal muscle, testis, bone, calvaria, osteoblasts and leukocytes. Expressed at intermediate level in liver, heart, kidney and spleen. Expressed at low level in lung, pancreas, placenta and ovary. Not detected in thymus, prostate, small intestine, tongue and colon. Isoform 1 and isoform 2 are expressed in kidney at the same level. Isoform 2 is expressed at lower level than isoform 1 in the other tissues.

The protein resides in the cell membrane. Receptor activated by multiple ligands, including osteocalcin (BGLAP), basic amino acids, and various cations. Activated by amino acids with a preference for basic amino acids such as L-Lys, L-Arg and L-ornithine but also by small and polar amino acids. The L-alpha amino acids respond is augmented by divalent cations Ca(2+) and Mg(2+). Seems to act through a G(q)/G(11) and G(i)-coupled pathway. Regulates testosterone production by acting as a ligand for uncarboxylated osteocalcin hormone: osteocalcin-binding at the surface of Leydig cells initiates a signaling response that promotes the expression of enzymes required for testosterone synthesis in a CREB-dependent manner. Mediates the non-genomic effects of androgens in multiple tissue. May coordinate nutritional and hormonal anabolic signals through the sensing of extracellular amino acids, osteocalcin, divalent ions and its responsiveness to anabolic steroids. This Homo sapiens (Human) protein is G-protein coupled receptor family C group 6 member A (GPRC6A).